The chain runs to 513 residues: ATP synthase subunit alpha (513 aa).

Residue 169 to 176 (GDRQCGKT) coordinates ATP.

This sequence belongs to the ATPase alpha/beta chains family. As to quaternary structure, F-type ATPases have 2 components, CF(1) - the catalytic core - and CF(0) - the membrane proton channel. CF(1) has five subunits: alpha(3), beta(3), gamma(1), delta(1), epsilon(1). CF(0) has three main subunits: a(1), b(2) and c(9-12). The alpha and beta chains form an alternating ring which encloses part of the gamma chain. CF(1) is attached to CF(0) by a central stalk formed by the gamma and epsilon chains, while a peripheral stalk is formed by the delta and b chains.

It localises to the cell inner membrane. It carries out the reaction ATP + H2O + 4 H(+)(in) = ADP + phosphate + 5 H(+)(out). Produces ATP from ADP in the presence of a proton gradient across the membrane. The alpha chain is a regulatory subunit. The chain is ATP synthase subunit alpha from Alteromonas mediterranea (strain DSM 17117 / CIP 110805 / LMG 28347 / Deep ecotype).